The chain runs to 217 residues: Adenylate kinase (217 aa).

An ATP-binding site is contributed by 10–15; it reads GAGKGT. The NMP stretch occupies residues 30 to 59; it reads STGDMFRAAMKEETDLGLEAKSYIDKGELV. Residues T31, R36, 57–59, 85–88, and Q92 contribute to the AMP site; these read ELV and GFPR. The LID stretch occupies residues 126–163; it reads GRRICKNCGATYHLVFNPPAKENVCDKCGGELYQREDD. R127 is a binding site for ATP. Zn(2+)-binding residues include C130 and C133. 136–137 is an ATP binding site; sequence TY. Residues C150 and C153 each contribute to the Zn(2+) site. The AMP site is built by R160 and R171. ATP is bound at residue K199.

Belongs to the adenylate kinase family. In terms of assembly, monomer.

The protein resides in the cytoplasm. It carries out the reaction AMP + ATP = 2 ADP. It functions in the pathway purine metabolism; AMP biosynthesis via salvage pathway; AMP from ADP: step 1/1. Catalyzes the reversible transfer of the terminal phosphate group between ATP and AMP. Plays an important role in cellular energy homeostasis and in adenine nucleotide metabolism. The polypeptide is Adenylate kinase (Bacillus licheniformis (strain ATCC 14580 / DSM 13 / JCM 2505 / CCUG 7422 / NBRC 12200 / NCIMB 9375 / NCTC 10341 / NRRL NRS-1264 / Gibson 46)).